The following is a 170-amino-acid chain: Large ribosomal subunit protein uL10 (170 aa).

This sequence belongs to the universal ribosomal protein uL10 family. As to quaternary structure, part of the ribosomal stalk of the 50S ribosomal subunit. The N-terminus interacts with L11 and the large rRNA to form the base of the stalk. The C-terminus forms an elongated spine to which L12 dimers bind in a sequential fashion forming a multimeric L10(L12)X complex.

In terms of biological role, forms part of the ribosomal stalk, playing a central role in the interaction of the ribosome with GTP-bound translation factors. The protein is Large ribosomal subunit protein uL10 of Chlamydia caviae (strain ATCC VR-813 / DSM 19441 / 03DC25 / GPIC) (Chlamydophila caviae).